The following is a 425-amino-acid chain: Serine hydroxymethyltransferase (425 aa).

(6S)-5,6,7,8-tetrahydrofolate is bound by residues Leu124 and 128 to 130 (GHL). At Lys233 the chain carries N6-(pyridoxal phosphate)lysine.

Belongs to the SHMT family. In terms of assembly, homodimer. It depends on pyridoxal 5'-phosphate as a cofactor.

Its subcellular location is the cytoplasm. The catalysed reaction is (6R)-5,10-methylene-5,6,7,8-tetrahydrofolate + glycine + H2O = (6S)-5,6,7,8-tetrahydrofolate + L-serine. Its pathway is one-carbon metabolism; tetrahydrofolate interconversion. It participates in amino-acid biosynthesis; glycine biosynthesis; glycine from L-serine: step 1/1. Functionally, catalyzes the reversible interconversion of serine and glycine with tetrahydrofolate (THF) serving as the one-carbon carrier. This reaction serves as the major source of one-carbon groups required for the biosynthesis of purines, thymidylate, methionine, and other important biomolecules. Also exhibits THF-independent aldolase activity toward beta-hydroxyamino acids, producing glycine and aldehydes, via a retro-aldol mechanism. The polypeptide is Serine hydroxymethyltransferase (Clavibacter sepedonicus (Clavibacter michiganensis subsp. sepedonicus)).